A 668-amino-acid polypeptide reads, in one-letter code: MAELATRVQELHHLLNKYSHEYYVQDNPSVPDSEYDKLLRELIDIENAHPEYKTEDSPTVRVGGEAQATFNKVRHDTPMLSLGNAFNEEELRRFDARVREKAGKVEYMCELKIDGLAVSLKYENGRFVQGLTRGDGTIGEDITANLRTIRAIPLRINKPLTFEVRGEAYMPKKSFEHLNQQKEEAGEQAFANPRNAAAGSLRQLDSKLAAKRRLSIFLYSVNDFTNFHAESQSEALDELDELGFKTNQNRKRVSDIDGVLEYIKYWTAHREELPYDIDGIVIKVNDLEEQEELGYTQKSPRWAIAYKFPAEEVVTKLLDIELSIGRTGVVTPTAVLEPVRVAGTTVSRASLHNEDLIHEKDIRIGDSVVIKKAGDIIPEVIRSLPDRRPEGTEPYHMPTHCPSCGHELVRLDGEVALRCINPKCPAQLVEGMIHFVSRQAMNIDGLGTKIIMQLYENEIIKDVGDLYYLTKDDLLPLERMGEKKADNLLNAIEASKKNSLEHLLFGLGIRHLGVKASQVIAERFETMDRLFKVTEEELLEIHDIGDKLATSLITYLNNKDIIALIEKLRRKNVNMTYEGIKTSEIQTDSEFNGKTVVLTGKLHNMTRTEASKWLEAQGAKTTSSVTKNTDLVIAGEDAGSKLTKAEKLGTEVWSEDEFIQKQKEVENK.

NAD(+) is bound by residues 32–36 (DSEYD), 81–82 (SL), and E110. The active-site N6-AMP-lysine intermediate is K112. Positions 133, 167, 283, and 307 each coordinate NAD(+). Positions 401, 404, 419, and 424 each coordinate Zn(2+). In terms of domain architecture, BRCT spans 586–668 (QTDSEFNGKT…IQKQKEVENK (83 aa)).

The protein belongs to the NAD-dependent DNA ligase family. LigA subfamily. The cofactor is Mg(2+). Requires Mn(2+) as cofactor.

It carries out the reaction NAD(+) + (deoxyribonucleotide)n-3'-hydroxyl + 5'-phospho-(deoxyribonucleotide)m = (deoxyribonucleotide)n+m + AMP + beta-nicotinamide D-nucleotide.. Functionally, DNA ligase that catalyzes the formation of phosphodiester linkages between 5'-phosphoryl and 3'-hydroxyl groups in double-stranded DNA using NAD as a coenzyme and as the energy source for the reaction. It is essential for DNA replication and repair of damaged DNA. This is DNA ligase from Staphylococcus carnosus (strain TM300).